The sequence spans 185 residues: Large ribosomal subunit protein bL12c (185 aa).

The transit peptide at 1–47 directs the protein to the chloroplast; sequence MASTALSSAFSLLSLPSSSSPAAAAAAAPRSFAVPSRARPRRAVAVV.

It belongs to the bacterial ribosomal protein bL12 family.

The protein localises to the plastid. It localises to the chloroplast. This chain is Large ribosomal subunit protein bL12c (RPL12-2), found in Oryza sativa subsp. japonica (Rice).